A 295-amino-acid polypeptide reads, in one-letter code: Ribosomal protein L11 methyltransferase (295 aa).

The S-adenosyl-L-methionine site is built by Thr145, Gly166, Asp188, and Asn230.

Belongs to the methyltransferase superfamily. PrmA family.

It is found in the cytoplasm. It carries out the reaction L-lysyl-[protein] + 3 S-adenosyl-L-methionine = N(6),N(6),N(6)-trimethyl-L-lysyl-[protein] + 3 S-adenosyl-L-homocysteine + 3 H(+). Functionally, methylates ribosomal protein L11. The sequence is that of Ribosomal protein L11 methyltransferase from Haemophilus influenzae (strain PittEE).